A 543-amino-acid chain; its full sequence is CTP synthase (543 aa).

An amidoligase domain region spans residues 1–265 (MTRFVFITGG…DQEVLRYFDL (265 aa)). Serine 13 serves as a coordination point for CTP. Serine 13 provides a ligand contact to UTP. 14–19 (SLGKGI) is an ATP binding site. Residue tyrosine 54 coordinates L-glutamine. Aspartate 71 contributes to the ATP binding site. Aspartate 71 and glutamate 139 together coordinate Mg(2+). CTP contacts are provided by residues 146-148 (DIE), 186-191 (KTKPTQ), and lysine 222. UTP-binding positions include 186 to 191 (KTKPTQ) and lysine 222. The region spanning 291–542 (RVAIVGKYTA…IAAAVKEAHR (252 aa)) is the Glutamine amidotransferase type-1 domain. An L-glutamine-binding site is contributed by glycine 354. Cysteine 381 (nucleophile; for glutamine hydrolysis) is an active-site residue. Residues 382–385 (FGMQ), glutamate 405, and arginine 470 each bind L-glutamine. Residues histidine 515 and glutamate 517 contribute to the active site.

This sequence belongs to the CTP synthase family. In terms of assembly, homotetramer.

The enzyme catalyses UTP + L-glutamine + ATP + H2O = CTP + L-glutamate + ADP + phosphate + 2 H(+). It catalyses the reaction L-glutamine + H2O = L-glutamate + NH4(+). The catalysed reaction is UTP + NH4(+) + ATP = CTP + ADP + phosphate + 2 H(+). It functions in the pathway pyrimidine metabolism; CTP biosynthesis via de novo pathway; CTP from UDP: step 2/2. Its activity is regulated as follows. Allosterically activated by GTP, when glutamine is the substrate; GTP has no effect on the reaction when ammonia is the substrate. The allosteric effector GTP functions by stabilizing the protein conformation that binds the tetrahedral intermediate(s) formed during glutamine hydrolysis. Inhibited by the product CTP, via allosteric rather than competitive inhibition. Its function is as follows. Catalyzes the ATP-dependent amination of UTP to CTP with either L-glutamine or ammonia as the source of nitrogen. Regulates intracellular CTP levels through interactions with the four ribonucleotide triphosphates. This chain is CTP synthase, found in Gluconobacter oxydans (strain 621H) (Gluconobacter suboxydans).